The chain runs to 109 residues: uncharacterized protein (109 aa).

It to A.fulgidus AF1885.

This is an uncharacterized protein from Methanocaldococcus jannaschii (strain ATCC 43067 / DSM 2661 / JAL-1 / JCM 10045 / NBRC 100440) (Methanococcus jannaschii).